A 322-amino-acid chain; its full sequence is N-acetyl-gamma-glutamyl-phosphate reductase (322 aa).

C132 is an active-site residue.

This sequence belongs to the NAGSA dehydrogenase family. Type 1 subfamily.

The protein resides in the cytoplasm. It carries out the reaction N-acetyl-L-glutamate 5-semialdehyde + phosphate + NADP(+) = N-acetyl-L-glutamyl 5-phosphate + NADPH + H(+). It participates in amino-acid biosynthesis; L-arginine biosynthesis; N(2)-acetyl-L-ornithine from L-glutamate: step 3/4. In terms of biological role, catalyzes the NADPH-dependent reduction of N-acetyl-5-glutamyl phosphate to yield N-acetyl-L-glutamate 5-semialdehyde. This is N-acetyl-gamma-glutamyl-phosphate reductase from Phocaeicola vulgatus (strain ATCC 8482 / DSM 1447 / JCM 5826 / CCUG 4940 / NBRC 14291 / NCTC 11154) (Bacteroides vulgatus).